We begin with the raw amino-acid sequence, 585 residues long: Probable G-protein coupled receptor Mth-like 10 (585 aa).

The signal sequence occupies residues 1–32; the sequence is MPKKIHQPGGSLYCGVTLLGVLCLVVFRLIPG. Residues 33 to 250 lie on the Extracellular side of the membrane; that stretch reads IPFGTYVMAE…DHSTVKIINS (218 aa). 5 disulfides stabilise this stretch: C56–C110, C112–C117, C121–C216, C122–C135, and C177–C236. N-linked (GlcNAc...) asparagine glycans are attached at residues N63 and N72. N-linked (GlcNAc...) asparagine glycosylation is found at N142, N152, N157, N198, and N223. The helical transmembrane segment at 251–271 threads the bilayer; the sequence is YAMMFSIPFMMLTIAVYLLIP. At 272-280 the chain is on the cytoplasmic side; it reads ELRNQHGKS. The chain crosses the membrane as a helical span at residues 281-301; the sequence is LVCYLIGLSVGYSSLCYVQLY. The Extracellular portion of the chain corresponds to 302 to 312; it reads QVDATGVTCKV. Residues 313–333 form a helical membrane-spanning segment; the sequence is FGYTAYFFFMGAYMWLSVISF. At 334 to 353 the chain is on the cytoplasmic side; the sequence is DLWHNFRGTRGINRFQEKKR. The chain crosses the membrane as a helical span at residues 354–374; sequence FLFYSLYSWGIALVFLAFTYC. Residues 375-404 lie on the Extracellular side of the membrane; sequence AQQLTNLPANLKPGIGDGVYCWLDMSNWAA. Residues 405–425 form a helical membrane-spanning segment; sequence MIYFYGPILAIVVANTIMFIM. Residues 426–466 are Cytoplasmic-facing; sequence TAIKIHGVQREMARIIASENSTKNLRTEKDKRFYRAWSNYR. The chain crosses the membrane as a helical span at residues 467-487; the sequence is FGLFLRLFLIMGITWLTELIS. The Extracellular portion of the chain corresponds to 488–498; sequence YFVGSDKGWSK. Residues 499–519 form a helical membrane-spanning segment; sequence LFYISDLANAMQGFLIFMLFV. At 520-585 the chain is on the cytoplasmic side; it reads MKKKVKHLIT…VDPQKTTIFR (66 aa).

Belongs to the G-protein coupled receptor 2 family. Mth subfamily.

Its subcellular location is the cell membrane. The chain is Probable G-protein coupled receptor Mth-like 10 (mthl10) from Drosophila melanogaster (Fruit fly).